An 80-amino-acid chain; its full sequence is UPF0125 protein XF_2346 (80 aa).

It belongs to the UPF0125 (RnfH) family.

The polypeptide is UPF0125 protein XF_2346 (Xylella fastidiosa (strain 9a5c)).